The primary structure comprises 518 residues: Probable high-affinity hexose transporter ght7 (518 aa).

Over 1–27 (MRDFQSRFADRYNQITNSYSYSSSRQG) the chain is Cytoplasmic. Residues 28–48 (LITGMVNVGSFFGCLLSSPVA) traverse the membrane as a helical segment. Over 49–54 (DKIGKR) the chain is Extracellular. The helical transmembrane segment at 55–75 (LSIIVWTTVYLIGIIIQVTTV) threads the bilayer. Residues 76-77 (PS) lie on the Cytoplasmic side of the membrane. The helical transmembrane segment at 78-98 (WVQILVAKIWTGLSIGALSVI) threads the bilayer. At 99–112 (TPGYQSEVAPAIMR) the chain is on the extracellular side. The helical transmembrane segment at 113 to 133 (GAIVTTYQLFITLGIFIAACI) threads the bilayer. The Cytoplasmic portion of the chain corresponds to 134 to 149 (NMGTHKYSHGTTAQWR). A helical membrane pass occupies residues 150–170 (ISIGINLLWGIITLVGIIFLP). Over 171–236 (ESPRYLIAIG…IFNANIRYRT (66 aa)) the chain is Extracellular. A helical membrane pass occupies residues 237 to 257 (FLGMAVMMFQQLTGANYYFYY). Residues 258–271 (GTQVFRGTGMDSPY) lie on the Cytoplasmic side of the membrane. The helical transmembrane segment at 272–292 (LAALIPDAVNCGCTFGAIFVL) threads the bilayer. Residues 293–298 (EFFGRR) lie on the Extracellular side of the membrane. Residues 299 to 319 (SPLIVGGIWQYICFFIYAAVG) form a helical membrane-spanning segment. Topologically, residues 320–333 (DRALYHKNGTSNHR) are cytoplasmic. Residues 334 to 354 (AGAVMIVFSCLFIFSFSQTWA) traverse the membrane as a helical segment. At 355-374 (PAAYVIVGESYPVRYRSKCA) the chain is on the extracellular side. The helical transmembrane segment at 375–395 (AVATSANWFWNFLISFFTPFI) threads the bilayer. Residues 396–402 (TNSIGFK) are Cytoplasmic-facing. A helical transmembrane segment spans residues 403-423 (YGYIFASCNLTGAAIIFLFVH). Over 424–518 (ETKGRTLEEI…IRPDKREPRL (95 aa)) the chain is Extracellular. Positions 477–506 (IENTDNQGDSGSFQTSTPDDSRPEQNQASA) are enriched in polar residues. Positions 477–518 (IENTDNQGDSGSFQTSTPDDSRPEQNQASATYIRPDKREPRL) are disordered.

It belongs to the major facilitator superfamily. Sugar transporter (TC 2.A.1.1) family.

It localises to the membrane. This Schizosaccharomyces pombe (strain 972 / ATCC 24843) (Fission yeast) protein is Probable high-affinity hexose transporter ght7 (ght7).